The following is a 202-amino-acid chain: Odorant-binding protein 59a (202 aa).

A signal peptide spans 1 to 20; it reads MKQLIFLLICLSCGTCSIYA. Residues 43–53 are compositionally biased toward basic and acidic residues; sequence HRQDEDEDRGR. A disordered region spans residues 43-105; sequence HRQDEDEDRG…QSDGRNHTSN (63 aa). Residues 54–65 are compositionally biased toward gly residues; sequence GGQGRQGNGYEY.

The protein belongs to the PBP/GOBP family. As to expression, expressed in non-neuronal cells in hygrosensitive sensilla in the second chamber of the sacculus of the antenna third segment (at protein level).

The protein localises to the secreted. Functionally, odorant-binding protein required for hygrotaxis behavior in humidity-detecting sensilla. This Drosophila melanogaster (Fruit fly) protein is Odorant-binding protein 59a.